The chain runs to 189 residues: Movement protein (189 aa).

This sequence belongs to the tombusvirus/aureusvirus movement protein p22 family. In terms of assembly, interacts with host protein HFI22. Post-translationally, phosphorylated.

It is found in the host membrane. Functionally, transports viral genome to neighboring plant cells directly through plasmosdesmata, without any budding. The movement protein allows efficient cell to cell propagation, by bypassing the host cell wall barrier. Displays RNA-binding activity. The sequence is that of Movement protein from Capsicum annuum (Capsicum pepper).